A 97-amino-acid polypeptide reads, in one-letter code: Large ribosomal subunit protein uL23 (97 aa).

This sequence belongs to the universal ribosomal protein uL23 family. In terms of assembly, part of the 50S ribosomal subunit. Contacts protein L29, and trigger factor when it is bound to the ribosome.

In terms of biological role, one of the early assembly proteins it binds 23S rRNA. One of the proteins that surrounds the polypeptide exit tunnel on the outside of the ribosome. Forms the main docking site for trigger factor binding to the ribosome. The chain is Large ribosomal subunit protein uL23 from Anaeromyxobacter dehalogenans (strain 2CP-1 / ATCC BAA-258).